Reading from the N-terminus, the 463-residue chain is Cysteine--tRNA ligase (463 aa).

A Zn(2+)-binding site is contributed by C28. The 'HIGH' region motif lies at 30 to 40 (VTIYDLCHIGH). 3 residues coordinate Zn(2+): C209, H234, and E238. The short motif at 266 to 270 (KMSKS) is the 'KMSKS' region element. Position 269 (K269) interacts with ATP.

It belongs to the class-I aminoacyl-tRNA synthetase family. As to quaternary structure, monomer. The cofactor is Zn(2+).

It is found in the cytoplasm. It carries out the reaction tRNA(Cys) + L-cysteine + ATP = L-cysteinyl-tRNA(Cys) + AMP + diphosphate. This chain is Cysteine--tRNA ligase, found in Tolumonas auensis (strain DSM 9187 / NBRC 110442 / TA 4).